A 337-amino-acid chain; its full sequence is DNA replication regulator sld2 (337 aa).

A phosphothreonine; by cdc2 mark is found at Thr60 and Thr74. The disordered stretch occupies residues 71 to 97 (KFQTPTKQRAETEANESPKAPRNDYLQ). At Ser87 the chain carries Phosphoserine; by cdc2. Thr99 and Thr154 each carry phosphothreonine; by cdc2. Ser183 carries the phosphoserine modification. The tract at residues 258–302 (SMNLSKSHLEGLPEIDEDAENGIDDNEDTTASKDSSPFLDLQSER) is disordered. Residues 270 to 285 (PEIDEDAENGIDDNED) are compositionally biased toward acidic residues.

This sequence belongs to the SLD2 family. In terms of assembly, interacts with rad4. In terms of processing, phosphorylated by cdc2 at the onset of S-phase.

It is found in the cytoplasm. Its subcellular location is the nucleus. Functionally, has a role in the initiation of DNA replication. Required at S-phase checkpoint. This is DNA replication regulator sld2 (drc1) from Schizosaccharomyces pombe (strain 972 / ATCC 24843) (Fission yeast).